The chain runs to 253 residues: Uridylate kinase (253 aa).

Lys-9 to Gly-12 serves as a coordination point for ATP. Gly-51 is a UMP binding site. The ATP site is built by Gly-52 and Arg-56. UMP-binding positions include Asp-72 and Ser-133 to Thr-140. 3 residues coordinate ATP: Thr-160, Tyr-166, and Asp-169.

The protein belongs to the UMP kinase family. Homohexamer.

It localises to the cytoplasm. It catalyses the reaction UMP + ATP = UDP + ADP. The protein operates within pyrimidine metabolism; CTP biosynthesis via de novo pathway; UDP from UMP (UMPK route): step 1/1. Its activity is regulated as follows. Inhibited by UTP. In terms of biological role, catalyzes the reversible phosphorylation of UMP to UDP. In Synechococcus sp. (strain JA-2-3B'a(2-13)) (Cyanobacteria bacterium Yellowstone B-Prime), this protein is Uridylate kinase.